The chain runs to 146 residues: Large ribosomal subunit protein bL19 (146 aa).

It belongs to the bacterial ribosomal protein bL19 family.

In terms of biological role, this protein is located at the 30S-50S ribosomal subunit interface and may play a role in the structure and function of the aminoacyl-tRNA binding site. This chain is Large ribosomal subunit protein bL19, found in Bartonella quintana (strain Toulouse) (Rochalimaea quintana).